The chain runs to 572 residues: Oxygen-dependent choline dehydrogenase (572 aa).

7–36 (DYIIIGAGSAGNVLATRLTEDRDVTVLLLE) serves as a coordination point for FAD. His474 serves as the catalytic Proton acceptor.

This sequence belongs to the GMC oxidoreductase family. The cofactor is FAD.

It catalyses the reaction choline + A = betaine aldehyde + AH2. The catalysed reaction is betaine aldehyde + NAD(+) + H2O = glycine betaine + NADH + 2 H(+). The protein operates within amine and polyamine biosynthesis; betaine biosynthesis via choline pathway; betaine aldehyde from choline (cytochrome c reductase route): step 1/1. In terms of biological role, involved in the biosynthesis of the osmoprotectant glycine betaine. Catalyzes the oxidation of choline to betaine aldehyde and betaine aldehyde to glycine betaine at the same rate. This chain is Oxygen-dependent choline dehydrogenase, found in Paraburkholderia phymatum (strain DSM 17167 / CIP 108236 / LMG 21445 / STM815) (Burkholderia phymatum).